The primary structure comprises 2352 residues: Highly reducing polyketide synthase ZEA2 (2352 aa).

The Ketosynthase family 3 (KS3) domain maps to 9–433 (PGPVAIVGLA…GTNGHVVLEA (425 aa)). Residues Cys-181, His-316, and His-356 each act as for beta-ketoacyl synthase activity in the active site. Residues 544–875 (FVFTGQGAQW…LATSLFLQGV (332 aa)) form a malonyl-CoA:ACP transacylase (MAT) domain region. Ser-634 functions as the For malonyltransferase activity in the catalytic mechanism. The tract at residues 923 to 1058 (RSIIGAPVPK…GLITIDYEGN (136 aa)) is N-terminal hotdog fold. One can recognise a PKS/mFAS DH domain in the interval 923–1242 (RSIIGAPVPK…TSELEMDGAA (320 aa)). The interval 925–1237 (IIGAPVPKMN…VIDFRTSELE (313 aa)) is dehydratase (DH) domain. The active-site Proton acceptor; for dehydratase activity is the His-955. The C-terminal hotdog fold stretch occupies residues 1086 to 1242 (PATYAKDRFY…TSELEMDGAA (157 aa)). The active-site Proton donor; for dehydratase activity is Asp-1152. An enoylreductase (ER) domain region spans residues 1643-1955 (GLLDTLYFVD…QGKHRGKIVL (313 aa)). Residues 1979–2159 (ATYLFVGGLG…VSVNLGIMRD (181 aa)) are catalytic ketoreductase (KRc) domain. A Carrier domain is found at 2269–2346 (KATEIITNAL…SFAGKLASTS (78 aa)). The residue at position 2306 (Ser-2306) is an O-(pantetheine 4'-phosphoryl)serine.

It functions in the pathway mycotoxin biosynthesis. Its function is as follows. Highly reducing polyketide synthase; part of the gene cluster that mediates the biosynthesis of zearalenone (ZEA), a nonsteroid estrogen that is a contaminant of cereal grains and causes estrogenic disorders in humans and animals. The ZEA backbone is synthesized from a single acetyl-CoA molecule and eight malonyl-CoA molecules. The reducing polyketide synthase ZEA2 is proposed to synthesize a reduced hexaketide intermediate by using different combinations of its reductive domains during each round of condensation. The hexaketide thioester is then transacylated to the non-reducing polyketide synthase ZEA1 and is further condensed with three malonyl-CoAs without reductive tailoring to yield a mixed reduced/unreduced nonaketide. ZEA1 must be able to interact with ZEA2 to facilitate starter-unit acyltransfer and initiate polyketide biosynthesis. ZEA1 also mediates the required C2-C7 cyclization to form the resorcylate core and catalyzes the formation of the macrolactone. ZEB1 is then responsible for the chemical conversion of beta-zearalenonol (beta-ZOL) to ZEA in the biosynthetic pathway. In Gibberella zeae (strain ATCC MYA-4620 / CBS 123657 / FGSC 9075 / NRRL 31084 / PH-1) (Wheat head blight fungus), this protein is Highly reducing polyketide synthase ZEA2.